A 392-amino-acid chain; its full sequence is ATP phosphoribosyltransferase regulatory subunit (392 aa).

This sequence belongs to the class-II aminoacyl-tRNA synthetase family. HisZ subfamily. In terms of assembly, heteromultimer composed of HisG and HisZ subunits.

The protein resides in the cytoplasm. Its pathway is amino-acid biosynthesis; L-histidine biosynthesis; L-histidine from 5-phospho-alpha-D-ribose 1-diphosphate: step 1/9. Its function is as follows. Required for the first step of histidine biosynthesis. May allow the feedback regulation of ATP phosphoribosyltransferase activity by histidine. In Synechococcus sp. (strain CC9902), this protein is ATP phosphoribosyltransferase regulatory subunit.